A 334-amino-acid polypeptide reads, in one-letter code: MPSKESWSGRKTNRATVHKSKQEGRQQDLLIAALGMKLGSQKSSVTIWQPLKLFAYSQLTSLVRRATLKENEQIPKYEKVHNFKVHTFRGPHWCEYCANFMWGLIAQGVKCADCGLNVHKQCSKMVPNDCKPDLKHVKKVYSCDLTTLVKAHITKRPMVVDMCIREIESRGLNSEGLYRVSGFSDLIEDVKMAFDRDGEKADISVNMYEDINIITGALKLYFRDLPIPLITYDAYPKFIESAKIVDPDEQLETLHEALRSLPPAHCETLRYLMAHLKRVTLHEKENLMSAENLGIVFGPTLMRSPELDPMAALNDIRYQRLVVELLIKNEDILF.

A compositionally biased stretch (polar residues) spans 1–10; that stretch reads MPSKESWSGR. A disordered region spans residues 1–22; it reads MPSKESWSGRKTNRATVHKSKQ. T67 carries the post-translational modification Phosphothreonine. A Phorbol-ester/DAG-type zinc finger spans residues 80 to 130; the sequence is VHNFKVHTFRGPHWCEYCANFMWGLIAQGVKCADCGLNVHKQCSKMVPNDC. A Rho-GAP domain is found at 143 to 334; it reads CDLTTLVKAH…LLIKNEDILF (192 aa). T215 bears the Phosphothreonine mark.

In terms of assembly, interacts with EPHA4; effector of EPHA4 in axon guidance linking EPHA4 activation to RAC1 regulation. Post-translationally, phosphorylated. Phosphorylation is EPHA4 kinase activity-dependent. As to expression, in neurons in brain regions that are involved in learning and memory processes.

Functionally, GTPase-activating protein for p21-rac and a phorbol ester receptor. Involved in the assembly of neuronal locomotor circuits as a direct effector of EPHA4 in axon guidance. This Rattus norvegicus (Rat) protein is N-chimaerin (Chn1).